The following is a 525-amino-acid chain: G patch domain-containing protein 3 (525 aa).

2 disordered regions span residues 54 to 85 (ERGP…PASD) and 246 to 317 (EQEE…QERT). Residues 274-299 (DEPEDEGQQQEEEEESGSEEDDDRGE) show a composition bias toward acidic residues. The span at 300-317 (EWERHEALHEDVTGQERT) shows a compositional bias: basic and acidic residues. Residues 411 to 459 (TKGIGRKVMERQGWAEGQGLGSRCSGVPEALDGDGQHPRCKRGLGYHGE) enclose the G-patch domain.

As to quaternary structure, interacts with mitochondrial MAVS; the interaction is markedly increased upon viral infection.

The protein resides in the nucleus. The protein localises to the cytoplasm. Its function is as follows. Involved in transcriptional regulation. It is able to activate transcription from CXCR4 promoter and therefore it might control neural crest cell migration involved in ocular and craniofacial development. Is a negative regulator of immune antiviral response, acting via down-regulation of RIG-I-like receptors signaling and inhibition of type I interferon production. The control mechanism involves interaction with mitochondrial MAVS and inhibition of MAVS assembly with downstream proteins implicated in antiviral response, such as TBK1 and TRAF6. The chain is G patch domain-containing protein 3 (Gpatch3) from Mus musculus (Mouse).